Consider the following 138-residue polypeptide: Large ribosomal subunit protein uL16 (138 aa).

The span at 1-19 shows a compositional bias: basic residues; that stretch reads MLIPRRVKHRKQHHPKRSG. Residues 1–24 are disordered; it reads MLIPRRVKHRKQHHPKRSGAAKGG.

This sequence belongs to the universal ribosomal protein uL16 family. Part of the 50S ribosomal subunit.

Binds 23S rRNA and is also seen to make contacts with the A and possibly P site tRNAs. The chain is Large ribosomal subunit protein uL16 from Micrococcus luteus (strain ATCC 4698 / DSM 20030 / JCM 1464 / CCM 169 / CCUG 5858 / IAM 1056 / NBRC 3333 / NCIMB 9278 / NCTC 2665 / VKM Ac-2230) (Micrococcus lysodeikticus).